Here is a 961-residue protein sequence, read N- to C-terminus: Aconitate hydratase A (961 aa).

Positions 499, 565, and 568 each coordinate [4Fe-4S] cluster.

This sequence belongs to the aconitase/IPM isomerase family. Monomer. [4Fe-4S] cluster serves as cofactor.

It catalyses the reaction citrate = D-threo-isocitrate. It carries out the reaction (2S,3R)-3-hydroxybutane-1,2,3-tricarboxylate = 2-methyl-cis-aconitate + H2O. The protein operates within carbohydrate metabolism; tricarboxylic acid cycle; isocitrate from oxaloacetate: step 2/2. Its pathway is organic acid metabolism; propanoate degradation. Functionally, involved in the catabolism of short chain fatty acids (SCFA) via the tricarboxylic acid (TCA)(acetyl degradation route) and probably via the 2-methylcitrate cycle I (propionate degradation route). Catalyzes the reversible isomerization of citrate to isocitrate via cis-aconitate. The apo form of AcnA functions as a RNA-binding regulatory protein. Could catalyze the hydration of 2-methyl-cis-aconitate to yield (2R,3S)-2-methylisocitrate. The chain is Aconitate hydratase A (acn) from Mycobacterium avium.